The following is a 209-amino-acid chain: MREIVSADDALRKLLEKACKFNESVDVAVHFFSKDSVKIGCVFKYPFYFGRVLVFCGEPQMAQVIDENVTYGGEELIERIKAKKNFVKGYKYSLASPPMMSKLSKIARILGPRGLMPDSKYGLVTHDIAAAVTAILGGKALFKTNKAGVMHSKIGNLGMGFDKLRENFQIFCESVFATRPKNVSLQSYVRSISVSSTMGDGCFVDFLAL.

This sequence belongs to the universal ribosomal protein uL1 family. As to quaternary structure, part of the 50S ribosomal subunit.

Its function is as follows. Binds directly to 23S rRNA. The L1 stalk is quite mobile in the ribosome, and is involved in E site tRNA release. Protein L1 is also a translational repressor protein, it controls the translation of the L11 operon by binding to its mRNA. The chain is Large ribosomal subunit protein uL1 (rplA) from Neorickettsia sennetsu (strain ATCC VR-367 / Miyayama) (Ehrlichia sennetsu).